The following is a 129-amino-acid chain: D-ribose pyranase (129 aa).

H20 acts as the Proton donor in catalysis. Substrate is bound by residues D28, H96, and 118–120 (YAN).

Belongs to the RbsD / FucU family. RbsD subfamily. In terms of assembly, homodecamer.

The protein resides in the cytoplasm. It catalyses the reaction beta-D-ribopyranose = beta-D-ribofuranose. The protein operates within carbohydrate metabolism; D-ribose degradation; D-ribose 5-phosphate from beta-D-ribopyranose: step 1/2. Its function is as follows. Catalyzes the interconversion of beta-pyran and beta-furan forms of D-ribose. The protein is D-ribose pyranase of Exiguobacterium sibiricum (strain DSM 17290 / CCUG 55495 / CIP 109462 / JCM 13490 / 255-15).